The sequence spans 301 residues: Peptidyl-prolyl isomerase CWC27 (301 aa).

Positions 9 to 159 (TTAKCILYTT…YPAVLKDVEI (151 aa)) constitute a PPIase cyclophilin-type domain. The segment at 251 to 280 (TELHDNVDEATTKETESQENIKEEPMDKRE) is disordered.

Belongs to the cyclophilin-type PPIase family. CWC27 subfamily. As to quaternary structure, belongs to the CWC complex (or CEF1-associated complex), a spliceosome subcomplex composed of the U2, U5 and U6 snRNAs and at least BUD13, BUD31, BRR2, CDC40, CEF1, CLF1, CUS1, CWC2, CWC15, CWC21, CWC22, CWC23, CWC24, CWC25, CWC27, ECM2, HSH155, IST3, ISY1, LEA1, MSL1, NTC20, PRP8, PRP9, PRP11, PRP19, PRP21, PRP22, PRP45, PRP46, SLU7, SMB1, SMD1, SMD2, SMD3, SMX2, SMX3, SNT309, SNU114, SPP2, SYF1, SYF2, RSE1 and YJU2.

The protein localises to the cytoplasm. The protein resides in the nucleus. It catalyses the reaction [protein]-peptidylproline (omega=180) = [protein]-peptidylproline (omega=0). PPIases accelerate the folding of proteins. Catalyzes the cis-trans isomerization of proline imidic peptide bonds in oligopeptides. Involved in pre-mRNA splicing. The sequence is that of Peptidyl-prolyl isomerase CWC27 (CWC27) from Saccharomyces cerevisiae (strain ATCC 204508 / S288c) (Baker's yeast).